We begin with the raw amino-acid sequence, 579 residues long: Vitamin B6 transporter TPN1 (579 aa).

12 helical membrane passes run 99–119 (TGGLSSMSSFLLGPLLFGLSF), 123–143 (LASSLISVTIGCLIAAYCSIM), 158–178 (LFGWWFVKLVALASIIGVMGW), 199–219 (PLWVGIVIVTVCSFLVAIFGI), 222–242 (VIKVETYLSVPVLTAFLLLYI), 275–295 (LCYSITATWGSITADYYILFP), 303–323 (IFCLTFFGTFLPTCFVGILGL), 363–383 (VVVLVFSLVSNNIINTYSAAF), 395–415 (IPRWFWSIVCTIICLVCALIG), 422–442 (ILGNFLPMIGYWISMYFILLF), 520–540 (FAFIVGVAGVVVGMAQAYWIG), and 546–566 (FGEYGGDVAMWLSMAFSGVVY).

The protein belongs to the purine-cytosine permease (2.A.39) family.

The protein resides in the membrane. Its function is as follows. Thiamine-regulated, high affinity import carrier of pyridoxine, pyridoxal and pyridoxamine. In Saccharomyces cerevisiae (Baker's yeast), this protein is Vitamin B6 transporter TPN1 (TPN1).